The following is a 610-amino-acid chain: E3 ubiquitin-protein ligase hrd-1 (610 aa).

Positions 1–23 (MRVSAGLMIGGSCVATAATILNA) are cleaved as a signal peptide. The Lumenal portion of the chain corresponds to 24–41 (FLINKQFYPSIVYLSKSN). Residues 42 to 62 (ASMAVIYVQGIVLVYLMFQLL) form a helical membrane-spanning segment. The Cytoplasmic segment spans residues 63 to 99 (KSILFGDLRAAEAEHLSERTWHAVLETCLAFTVFRDD). A helical transmembrane segment spans residues 100–120 (FSAIFVMQFIGLLFIKCFHWL). The Lumenal portion of the chain corresponds to 121–144 (ADDRVDMMERSPVITLRFHLRMMT). Residues 145 to 165 (VLAALGFADSYFVSSAYFTTI) form a helical membrane-spanning segment. Topologically, residues 166-170 (TRGAS) are cytoplasmic. Residues 171 to 191 (AQIVFGFEYAILLALVLHVTI) form a helical membrane-spanning segment. Over 192–215 (KYLLHMHDLRNPQSWDNKAVYLLY) the chain is Lumenal. A helical membrane pass occupies residues 216–236 (AELFINLIRCLLYGFFAVVML). Over 237-610 (RVHTFPLFSV…ARLLGENANQ (374 aa)) the chain is Cytoplasmic. The RING-type; atypical zinc-finger motif lies at 292–333 (CIICREEMTVDASPKRLPCSHVFHAHCLRSWFQRQQTCPTCR). 3 disordered regions span residues 386–408 (QPAG…GPFP), 452–480 (VNTT…LRRM), and 521–610 (RPVV…NANQ). The segment covering 452–474 (VNTTQGTSSETPPVNPSYSQLST) has biased composition (polar residues). Residues 560–589 (TESPSTSSTAPSTSSPVTASSTPTTSSTRT) are compositionally biased toward low complexity.

It belongs to the HRD1 family. Homodimer.

The protein resides in the endoplasmic reticulum membrane. It catalyses the reaction S-ubiquitinyl-[E2 ubiquitin-conjugating enzyme]-L-cysteine + [acceptor protein]-L-lysine = [E2 ubiquitin-conjugating enzyme]-L-cysteine + N(6)-ubiquitinyl-[acceptor protein]-L-lysine.. It functions in the pathway protein modification; protein ubiquitination. Acts as an E3 ubiquitin-protein ligase which accepts ubiquitin specifically from endoplasmic reticulum-associated ubc-7 E2 ligase and transfers it to substrates, promoting their degradation. Component of the endoplasmic reticulum quality control (ERQC) system, which is also called the ER-associated degradation (ERAD) system, involved in ubiquitin-dependent degradation of misfolded endoplasmic reticulum proteins. Also promotes the degradation of normal but naturally short-lived proteins. Protects cells from ER stress-induced apoptosis. Thought to play a role together with hsp-3 in developmental growth and function of intestinal cells and to play a role together with hsp-4 in gonad formation. Plays a key role in the degradation of the potassium channel slo-1, perhaps acting directly, in targeting slo-1 to the ER-associated degradation pathway (ERAD), and also indirectly, via activation of the transcription factor skn-1, which mediates proteasomal homeostasis. In Caenorhabditis elegans, this protein is E3 ubiquitin-protein ligase hrd-1 (sel-11).